The sequence spans 224 residues: Holliday junction branch migration complex subunit RuvA (224 aa).

The domain I stretch occupies residues 1–64 (MIGRLSGVLV…EDLLQLYGFP (64 aa)). The segment at 65–143 (TLLEKEWHRL…EVMAMGGTLE (79 aa)) is domain II. Residues 144 to 171 (AALDGVIEDGMAASEGIEPPSAARPAVP) are flexible linker. Positions 172–224 (SAASDQAGALSALVNLGYGQGEAASAVATAAGEGAVGETDIIRAALRLLAPKG) are domain III.

Belongs to the RuvA family. Homotetramer. Forms an RuvA(8)-RuvB(12)-Holliday junction (HJ) complex. HJ DNA is sandwiched between 2 RuvA tetramers; dsDNA enters through RuvA and exits via RuvB. An RuvB hexamer assembles on each DNA strand where it exits the tetramer. Each RuvB hexamer is contacted by two RuvA subunits (via domain III) on 2 adjacent RuvB subunits; this complex drives branch migration. In the full resolvosome a probable DNA-RuvA(4)-RuvB(12)-RuvC(2) complex forms which resolves the HJ.

It localises to the cytoplasm. The RuvA-RuvB-RuvC complex processes Holliday junction (HJ) DNA during genetic recombination and DNA repair, while the RuvA-RuvB complex plays an important role in the rescue of blocked DNA replication forks via replication fork reversal (RFR). RuvA specifically binds to HJ cruciform DNA, conferring on it an open structure. The RuvB hexamer acts as an ATP-dependent pump, pulling dsDNA into and through the RuvAB complex. HJ branch migration allows RuvC to scan DNA until it finds its consensus sequence, where it cleaves and resolves the cruciform DNA. This is Holliday junction branch migration complex subunit RuvA from Dinoroseobacter shibae (strain DSM 16493 / NCIMB 14021 / DFL 12).